Reading from the N-terminus, the 355-residue chain is Glucose-6-phosphatase 2 (355 aa).

At 1–24 the chain is on the lumenal side; sequence MDFLHRSGVLIIHHLQEDYRTYYG. Residues 25–45 form a helical membrane-spanning segment; it reads FLNFMSNVGDPRNIFSIYFPL. At 46-56 the chain is on the cytoplasmic side; it reads WFQLNQNVGTK. The chain crosses the membrane as a helical span at residues 57–77; the sequence is MIWVAVIGDWFNLIFKWILFG. Topologically, residues 78 to 115 are lumenal; sequence HRPYWWIQETEIYPNHSSPCLEQFPTTCETGPGSPSGH. Substrate is bound at residue R79. N-linked (GlcNAc...) asparagine glycosylation occurs at N92. Residue H115 is the Proton donor of the active site. The chain crosses the membrane as a helical span at residues 116–136; the sequence is AMGSSCVWYVMVTAALSYTIS. Topologically, residues 137 to 146 are cytoplasmic; it reads RMEESSVTLH. Residues 147–167 traverse the membrane as a helical segment; that stretch reads RLTWSFLWSVFWLIQISVCIS. A topological domain (lumenal) is located at residue R168. A substrate-binding site is contributed by R168. The chain crosses the membrane as a helical span at residues 169-189; sequence VFIATHFPHQVILGVIGGMLV. The active-site Nucleophile is the H174. The Cytoplasmic segment spans residues 190 to 211; sequence AEAFEHTPGVHMASLSVYLKTN. Residues 212–232 form a helical membrane-spanning segment; it reads VFLFLFALGFYLLLRLFGIDL. Over 233 to 252 the chain is Lumenal; the sequence is LWSVPIAKKWCANPDWIHID. The helical transmembrane segment at 253 to 273 threads the bilayer; it reads STPFAGLVRNLGVLFGLGFAI. Residues 274–290 lie on the Cytoplasmic side of the membrane; sequence NSEMFLRSCQGENGTKP. A helical membrane pass occupies residues 291 to 307; that stretch reads SFRLLCALTSLTTMQLY. Topologically, residues 308–318 are lumenal; the sequence is RFIKIPTHAEP. The helical transmembrane segment at 319 to 339 threads the bilayer; it reads LFYLLSFCKSASIPLMVVALI. At 340-355 the chain is on the cytoplasmic side; it reads PYCVHMLMRPGDKKTK. A Prevents secretion from ER motif is present at residues 352–355; that stretch reads KKTK.

It belongs to the glucose-6-phosphatase family. In terms of processing, N-glycosylated; the non-glycosylated form is more unstable and is degraded through the proteasome. As to expression, specifically expressed in pancreatic islet cells, in particular those of beta-cell origin. Not detected in testis, kidney, muscle, liver, lung, spleen, brain, pituitary, gastric fundus or heart.

The protein resides in the endoplasmic reticulum membrane. It carries out the reaction D-glucose 6-phosphate + H2O = D-glucose + phosphate. It functions in the pathway carbohydrate biosynthesis; gluconeogenesis. May hydrolyze glucose-6-phosphate to glucose in the endoplasmic reticulum. May be responsible for glucose production through glycogenolysis and gluconeogenesis. The sequence is that of Glucose-6-phosphatase 2 (G6pc2) from Mus musculus (Mouse).